The following is a 97-amino-acid chain: YcgL domain-containing protein PFLU_1517 (97 aa).

Residues 3–87 enclose the YcgL domain; the sequence is RICSIYRSKK…AEDEYIEHLP (85 aa).

In Pseudomonas fluorescens (strain SBW25), this protein is YcgL domain-containing protein PFLU_1517.